Here is a 194-residue protein sequence, read N- to C-terminus: Leucyl/phenylalanyl-tRNA--protein transferase (194 aa).

Belongs to the L/F-transferase family.

The protein resides in the cytoplasm. It catalyses the reaction N-terminal L-lysyl-[protein] + L-leucyl-tRNA(Leu) = N-terminal L-leucyl-L-lysyl-[protein] + tRNA(Leu) + H(+). The catalysed reaction is N-terminal L-arginyl-[protein] + L-leucyl-tRNA(Leu) = N-terminal L-leucyl-L-arginyl-[protein] + tRNA(Leu) + H(+). The enzyme catalyses L-phenylalanyl-tRNA(Phe) + an N-terminal L-alpha-aminoacyl-[protein] = an N-terminal L-phenylalanyl-L-alpha-aminoacyl-[protein] + tRNA(Phe). Its function is as follows. Functions in the N-end rule pathway of protein degradation where it conjugates Leu, Phe and, less efficiently, Met from aminoacyl-tRNAs to the N-termini of proteins containing an N-terminal arginine or lysine. The chain is Leucyl/phenylalanyl-tRNA--protein transferase from Chlorobium limicola (strain DSM 245 / NBRC 103803 / 6330).